A 233-amino-acid chain; its full sequence is Antigenic membrane protein (233 aa).

Residues 1–32 form the signal peptide; sequence MQNQKNQKSLVAKVLVLFAAVALMFVGVQVFA. Residues 206-226 traverse the membrane as a helical segment; it reads FLTLVAVVVVAAVAGGVFFFV.

Its subcellular location is the cell membrane. The polypeptide is Antigenic membrane protein (amp) (Onion yellows phytoplasma (strain OY-M)).